A 247-amino-acid polypeptide reads, in one-letter code: E3 ubiquitin-protein ligase RNF182 (247 aa).

The segment at 20–68 adopts an RING-type zinc-finger fold; that stretch reads CKICYNRYNLKQRKPKVLECCHRVCAKCLYKIIDFGDSPQGVIVCPFCR. The next 2 membrane-spanning stretches (helical) occupy residues 184 to 204 and 211 to 231; these read VLVWLLGLLYFSSLPLGIYLL and LGVVFVSLVPSSLVILMVYGF.

Interacts with ATP6V0C. In terms of tissue distribution, up-regulated in neuronal cells subjected to cell death-inducing injuries, such as oxygen and glucose deprivation (at protein level). Could be up-regulated in Alzheimer disease brains. Highly expressed in innate immune organs such as lymph nodes and spleen and in immune cells such as macrophages and dendritic cells.

The protein localises to the membrane. Its subcellular location is the cytoplasm. The enzyme catalyses S-ubiquitinyl-[E2 ubiquitin-conjugating enzyme]-L-cysteine + [acceptor protein]-L-lysine = [E2 ubiquitin-conjugating enzyme]-L-cysteine + N(6)-ubiquitinyl-[acceptor protein]-L-lysine.. Its pathway is protein modification; protein ubiquitination. Its function is as follows. E3 ubiquitin-protein ligase that mediates the ubiquitination of ATP6V0C and targets it to degradation via the ubiquitin-proteasome pathway. Also plays a role in the inhibition of TLR-triggered innate immune response by mediating 'Lys'-48-linked ubiquitination and subsequent degradation of NF-kappa-B component RELA. This is E3 ubiquitin-protein ligase RNF182 (RNF182) from Homo sapiens (Human).